The sequence spans 627 residues: CTP synthase (627 aa).

Positions 300-554 constitute a Glutamine amidotransferase type-1 domain; that stretch reads CIAVVGKYTK…LASVDRLNQY (255 aa). Catalysis depends on for GATase activity residues cysteine 399, histidine 526, and glutamate 528. A phosphoserine mark is found at serine 567, serine 570, serine 571, and serine 588. Threonine 595 carries the post-translational modification Phosphothreonine. Residues 599 to 613 show a composition bias toward polar residues; that stretch reads GISKSCNGSISTSDS. The segment at 599 to 627 is disordered; the sequence is GISKSCNGSISTSDSEGACGGVDPTNGHK.

It belongs to the CTP synthase family. In terms of tissue distribution, in ovary, expressed in oocytes, follicle cells and nurse cells. Also expressed in larval and adult testis (at protein level). In larvae, expressed in lymph gland, salivary gland, regions of the midgut, testis, optical lobe and trachea. Isoform 1 is expressed in adult testis, ovary, accessory gland and head. Isoform 2 is weakly expressed in ovary.

It is found in the cytoplasm. The catalysed reaction is UTP + L-glutamine + ATP + H2O = CTP + L-glutamate + ADP + phosphate + 2 H(+). It participates in pyrimidine metabolism; CTP biosynthesis via de novo pathway; CTP from UDP: step 2/2. Its function is as follows. Catalyzes the ATP-dependent amination of UTP to CTP with either L-glutamine or ammonia as the source of nitrogen. Constitutes the rate-limiting enzyme in the synthesis of cytosine nucleotides. Required for assembly of cytoophidium in female germline cells. In nurse cells, CTPsyn filament assembly in the cytoophidium is regulated by Ack kinase which may thereby contribute to the control of CTP production at specific stages of oogenesis and development of the nurse cell membrane. The protein is CTP synthase of Drosophila melanogaster (Fruit fly).